The chain runs to 304 residues: Non-specific ribonucleoside hydrolase RihC (304 aa).

Residue His233 is part of the active site.

It belongs to the IUNH family. RihC subfamily.

Hydrolyzes both purine and pyrimidine ribonucleosides with a broad-substrate specificity. This Escherichia coli O7:K1 (strain IAI39 / ExPEC) protein is Non-specific ribonucleoside hydrolase RihC.